The sequence spans 222 residues: Putative cobalt transport protein CbiM (222 aa).

6 helical membrane passes run 8–28 (LPME…GYGI), 43–63 (PLLA…LPSV), 75–95 (LGAI…VLLF), 107–127 (TLGA…YLVF), 134–154 (LNIT…TYLT), and 178–198 (IFAI…ALLW).

The protein belongs to the CbiM family. Forms an energy-coupling factor (ECF) transporter complex composed of an ATP-binding protein (A component, CbiO), a transmembrane protein (T component, CbiQ) and 2 possible substrate-capture proteins (S components, CbiM and CbiN) of unknown stoichimetry.

The protein resides in the cell membrane. The protein operates within cofactor biosynthesis; adenosylcobalamin biosynthesis. Functionally, part of the energy-coupling factor (ECF) transporter complex CbiMNOQ involved in cobalt import. The sequence is that of Putative cobalt transport protein CbiM from Methanococcus voltae (strain ATCC BAA-1334 / A3).